A 158-amino-acid chain; its full sequence is MQCPSCQNTDSRVLESRAADAGRSVRRRRECLHCDFRFTTYERVETVPITVLKRNGNRETFNRSKILNGLTLACQKTGLEQDRLESMVNELELQLQQRSGREVNSAEIGEMVLDQLSEMSEVAYVRFASVYRDFRGVNDFVAALEGIHANKEQLAAVR.

A zinc finger lies at 3 to 34 (CPSCQNTDSRVLESRAADAGRSVRRRRECLHC). The ATP-cone domain maps to 49-139 (ITVLKRNGNR…VYRDFRGVND (91 aa)).

It belongs to the NrdR family. Zn(2+) serves as cofactor.

Negatively regulates transcription of bacterial ribonucleotide reductase nrd genes and operons by binding to NrdR-boxes. This Prochlorococcus marinus (strain MIT 9313) protein is Transcriptional repressor NrdR.